The following is a 1115-amino-acid chain: DNA-directed RNA polymerase subunit beta (1115 aa).

The interval 1084–1115 (HEAGEGEDDEYFEEDEEAVDDEPMTFDDDDME) is disordered. The segment covering 1088 to 1115 (EGEDDEYFEEDEEAVDDEPMTFDDDDME) has biased composition (acidic residues).

Belongs to the RNA polymerase beta chain family. In terms of assembly, the RNAP catalytic core consists of 2 alpha, 1 beta, 1 beta' and 1 omega subunit. When a sigma factor is associated with the core the holoenzyme is formed, which can initiate transcription.

It carries out the reaction RNA(n) + a ribonucleoside 5'-triphosphate = RNA(n+1) + diphosphate. Its function is as follows. DNA-dependent RNA polymerase catalyzes the transcription of DNA into RNA using the four ribonucleoside triphosphates as substrates. The protein is DNA-directed RNA polymerase subunit beta of Desulfitobacterium hafniense (strain DSM 10664 / DCB-2).